Here is an 877-residue protein sequence, read N- to C-terminus: MSELSESGSYNSYNSLSAGSPLPLQEIFNGAETKCQSHYLQSRINTNYEQVKQQLKESAEKKNSSKIYSSLQHLTYYKVEKDLLETILRIIDITDDKKTLRLAYYFLGEISQFKHLINNSTEIKNITTIFNKEMQHKDISRKVVSLKTTASVAPNDVLIDANILDVISGILRKVGEDPDKTQKKKGFFTRATTDLGRERSLLQYSCFVACRNRYKNNPSLFMPIVEGIKCVDPVGARHAVSLTLNYALENPSTVAATTKRFIPLLKANKGKEAVYLVDPFARRNFIKLCGHLAATPSPIGNVITMENKDFFQSLCQSVMDAHLSVAFYAINVLSRFSWPTLESAHIDAIQFDSELPHFESLAFQTSLIVGICNKMRIGFNTYSIGAYSNYSMQHGHHHLHHYHQGGSGTVGGSVPSSSSSSSSSSNITTSALSSGSSSNSSLSSQQLLLVQQQQQQLLHQQSNPFLHLACKLISVLSQSYVKYSYPKDSTTQQPIIGDWSFDEKQYQHQSVYPYHHNLSPFTGLPNPISNNNNSSNNTKDQSTTTTTSTTSSSSNSIHPFSSLTQLILNLLNISPSISIRIQALKALVWLCPSNLDQSKLYLETFRSQLRDPYHPTHLFKELFLELYKRIIATPILSPMILELVYDWIDIIPSKCDTSLVCEIWKTIVEFGKVFANEKLLASIFKILDRIVHPDFRVLAMEIQKDIIKFLGEYSNQITFEQPSRFEQCKSRSGSNQQQHLSNMSLNSIIQRLQQYSIFSPWQIRLESIDSLAKIAFQSSTVVKVHIYNFLTLLPNESHGWTTVKSNTSIIVNTLDQLLTCRAKWLPLFKSSDLSQNQIKDLKNDHTNLCLQIGLFFDQLSFDYLPLGIESKKYLGSK.

2 disordered regions span residues 398-437 (HLHH…SGSS) and 522-557 (TGLP…SNSI). Composition is skewed to low complexity over residues 412 to 437 (GSVP…SGSS) and 529 to 556 (SNNN…SSNS).

As to quaternary structure, component of the TSET complex, a heterohexamer composed of tstA, tstB, tstC, tstD, tstE and tstF, which may act in plasma membrane turnover. tstA, tstB, tstC and tstD are likely to be the core complex members with tstE and tstF acting as associated scaffold proteins.

In Dictyostelium discoideum (Social amoeba), this protein is TSET complex member tstB.